Consider the following 470-residue polypeptide: Argininosuccinate lyase (470 aa).

This sequence belongs to the lyase 1 family. Argininosuccinate lyase subfamily.

It is found in the cytoplasm. The enzyme catalyses 2-(N(omega)-L-arginino)succinate = fumarate + L-arginine. It functions in the pathway amino-acid biosynthesis; L-arginine biosynthesis; L-arginine from L-ornithine and carbamoyl phosphate: step 3/3. This is Argininosuccinate lyase from Ehrlichia chaffeensis (strain ATCC CRL-10679 / Arkansas).